Here is a 415-residue protein sequence, read N- to C-terminus: Glutamyl-tRNA reductase (415 aa).

Substrate contacts are provided by residues 49–52, Ser104, 109–111, and Gln115; these read TCNR and EPQ. Residue Cys50 is the Nucleophile of the active site. 184–189 contacts NADP(+); sequence GAGEMI.

This sequence belongs to the glutamyl-tRNA reductase family. As to quaternary structure, homodimer.

It catalyses the reaction (S)-4-amino-5-oxopentanoate + tRNA(Glu) + NADP(+) = L-glutamyl-tRNA(Glu) + NADPH + H(+). It participates in porphyrin-containing compound metabolism; protoporphyrin-IX biosynthesis; 5-aminolevulinate from L-glutamyl-tRNA(Glu): step 1/2. Functionally, catalyzes the NADPH-dependent reduction of glutamyl-tRNA(Glu) to glutamate 1-semialdehyde (GSA). The protein is Glutamyl-tRNA reductase of Neisseria meningitidis serogroup C (strain 053442).